The following is a 348-amino-acid chain: Selenide, water dikinase (348 aa).

Residue Cys17 is part of the active site. Residues Lys20 and 48–50 (TRD) each bind ATP. Asp51 provides a ligand contact to Mg(2+). ATP is bound by residues Asp68, Asp91, and 139-141 (GHS). Position 91 (Asp91) interacts with Mg(2+). Asp227 contributes to the Mg(2+) binding site.

Belongs to the selenophosphate synthase 1 family. Class I subfamily. Homodimer. The cofactor is Mg(2+).

The catalysed reaction is hydrogenselenide + ATP + H2O = selenophosphate + AMP + phosphate + 2 H(+). Synthesizes selenophosphate from selenide and ATP. In Yersinia pestis, this protein is Selenide, water dikinase.